A 296-amino-acid chain; its full sequence is Aquaporin PIP1-6 (296 aa).

2 helical membrane passes run 63–83 (IAEF…VMGV) and 98–120 (IAWA…SGGH). Positions 122–124 (NPA) match the NPA 1 motif. 3 consecutive transmembrane segments (helical) span residues 141-161 (VYYV…VKAF), 183-203 (GDGL…VFSA), and 217-237 (ALAP…TIPI). The NPA 2 motif lies at 243-245 (NPA). A helical transmembrane segment spans residues 265-285 (IFWVGPFAGAALAAVYHQVVL).

This sequence belongs to the MIP/aquaporin (TC 1.A.8) family. PIP (TC 1.A.8.11) subfamily.

The protein localises to the cell membrane. Functionally, aquaporins facilitate the transport of water and small neutral solutes across cell membranes. The chain is Aquaporin PIP1-6 (PIP1-6) from Zea mays (Maize).